The sequence spans 248 residues: Uridylate kinase (248 aa).

13-16 (KLSG) contacts ATP. Gly55 is a binding site for UMP. ATP-binding residues include Gly56 and Arg60. Residues Asp75 and 136-143 (TGNPYFTT) each bind UMP. The ATP site is built by Thr163, Tyr169, and Asp172.

The protein belongs to the UMP kinase family. As to quaternary structure, homohexamer.

It is found in the cytoplasm. The enzyme catalyses UMP + ATP = UDP + ADP. It functions in the pathway pyrimidine metabolism; CTP biosynthesis via de novo pathway; UDP from UMP (UMPK route): step 1/1. Inhibited by UTP. In terms of biological role, catalyzes the reversible phosphorylation of UMP to UDP. This Leptospira interrogans serogroup Icterohaemorrhagiae serovar copenhageni (strain Fiocruz L1-130) protein is Uridylate kinase.